Here is a 58-residue protein sequence, read N- to C-terminus: MRYYGSYYRGLGYGCGGFGGLGYGCGCGGYRYGSGYGGYRYGCCRPSCREGYGFSGFY.

It belongs to the KRTAP type 19 family. Interacts with hair keratins.

In terms of biological role, in the hair cortex, hair keratin intermediate filaments are embedded in an interfilamentous matrix, consisting of hair keratin-associated proteins (KRTAP), which are essential for the formation of a rigid and resistant hair shaft through their extensive disulfide bond cross-linking with abundant cysteine residues of hair keratins. The matrix proteins include the high-sulfur and high-glycine-tyrosine keratins. In Homo sapiens (Human), this protein is Keratin-associated protein 19-6 (KRTAP19-6).